We begin with the raw amino-acid sequence, 283 residues long: MTKVIQTVSEMQQITQELKSTGKTIGFVPTMGALHEGHLSMMRRSVEENDITVISVFVNPLQFGPNEDFDAYPRQIDQDVALVEAINVDYVFHPAVEEMYPNELSVTLKVGRLAEVLEGAQRPGHFDGVVTVLNKLFNIVSPNKAYFGKKDAQQLAIVEKMVEDFNHPIQIVGIDIVREEDGLARSSRNVYLTDDERQEAVHLSKSLEIAQTLYKQGERRSHIIVGEIKTYLSEHTSGHIDEVAIYSYPDLEVATEIQGQIFISLAVKFSKARLIDNIILGSE.

31–38 is an ATP binding site; it reads MGALHEGH. The active-site Proton donor is His38. Residue Gln62 coordinates (R)-pantoate. Gln62 serves as a coordination point for beta-alanine. 148–151 lines the ATP pocket; that stretch reads GKKD. Gln154 is a binding site for (R)-pantoate. Residues Val177 and 185 to 188 each bind ATP; that span reads RSSR.

Belongs to the pantothenate synthetase family. In terms of assembly, homodimer.

It is found in the cytoplasm. It catalyses the reaction (R)-pantoate + beta-alanine + ATP = (R)-pantothenate + AMP + diphosphate + H(+). It participates in cofactor biosynthesis; (R)-pantothenate biosynthesis; (R)-pantothenate from (R)-pantoate and beta-alanine: step 1/1. Catalyzes the condensation of pantoate with beta-alanine in an ATP-dependent reaction via a pantoyl-adenylate intermediate. The polypeptide is Pantothenate synthetase (Staphylococcus haemolyticus (strain JCSC1435)).